A 113-amino-acid polypeptide reads, in one-letter code: Large ribosomal subunit protein eL33 (113 aa).

It belongs to the eukaryotic ribosomal protein eL33 family.

This chain is Large ribosomal subunit protein eL33 (RPL35A), found in Tetrahymena thermophila (strain SB210).